A 386-amino-acid chain; its full sequence is 2,3-diketo-5-methylthiopentyl-1-phosphate enolase (386 aa).

Residue K85 is the Proton acceptor of the active site. Residues K131, 157–160, H248, G316, and 338–339 each bind substrate; these read KDDE and GT. Positions 157, 159, and 160 each coordinate Mg(2+). K157 carries the N6-carboxylysine modification.

The protein belongs to the RuBisCO large chain family. Type IV subfamily. Homodimer. Mg(2+) serves as cofactor.

It carries out the reaction 5-methylsulfanyl-2,3-dioxopentyl phosphate = 2-hydroxy-5-methylsulfanyl-3-oxopent-1-enyl phosphate. It functions in the pathway amino-acid biosynthesis; L-methionine biosynthesis via salvage pathway; L-methionine from S-methyl-5-thio-alpha-D-ribose 1-phosphate: step 3/6. In terms of biological role, catalyzes the enolization of 2,3-diketo-5-methylthiopentyl-1-phosphate (DK-MTP-1-P) into 2-hydroxy-3-keto-5-methylthiopentenyl-1-phosphate (HK-MTPenyl-1-P). The polypeptide is 2,3-diketo-5-methylthiopentyl-1-phosphate enolase (mtnW) (Microcystis aeruginosa).